The chain runs to 339 residues: Serpentine receptor class alpha-21 (339 aa).

The next 5 membrane-spanning stretches (helical) occupy residues 30–50 (FNFL…WLAI), 150–170 (FIAV…FYIA), 199–219 (VRTV…YLSV), 250–270 (ILIV…NLLL), and 282–302 (VLVA…PLVI).

Belongs to the nematode receptor-like protein sra family.

It localises to the membrane. The sequence is that of Serpentine receptor class alpha-21 (sra-21) from Caenorhabditis elegans.